The sequence spans 152 residues: SsrA-binding protein (152 aa).

Positions 124-152 are disordered; sequence KKLHDKRDTAAERDWQRDKARLMKGDRGD. Residues 128 to 152 show a composition bias toward basic and acidic residues; sequence DKRDTAAERDWQRDKARLMKGDRGD.

It belongs to the SmpB family.

It is found in the cytoplasm. Its function is as follows. Required for rescue of stalled ribosomes mediated by trans-translation. Binds to transfer-messenger RNA (tmRNA), required for stable association of tmRNA with ribosomes. tmRNA and SmpB together mimic tRNA shape, replacing the anticodon stem-loop with SmpB. tmRNA is encoded by the ssrA gene; the 2 termini fold to resemble tRNA(Ala) and it encodes a 'tag peptide', a short internal open reading frame. During trans-translation Ala-aminoacylated tmRNA acts like a tRNA, entering the A-site of stalled ribosomes, displacing the stalled mRNA. The ribosome then switches to translate the ORF on the tmRNA; the nascent peptide is terminated with the 'tag peptide' encoded by the tmRNA and targeted for degradation. The ribosome is freed to recommence translation, which seems to be the essential function of trans-translation. This Caulobacter vibrioides (strain ATCC 19089 / CIP 103742 / CB 15) (Caulobacter crescentus) protein is SsrA-binding protein.